Consider the following 370-residue polypeptide: Phosphate acyltransferase (370 aa).

A disordered region spans residues 349-370 (SAGRAGQDAPDEMAAPGRSEKR).

The protein belongs to the PlsX family. In terms of assembly, homodimer. Probably interacts with PlsY.

The protein localises to the cytoplasm. The enzyme catalyses a fatty acyl-[ACP] + phosphate = an acyl phosphate + holo-[ACP]. The protein operates within lipid metabolism; phospholipid metabolism. Catalyzes the reversible formation of acyl-phosphate (acyl-PO(4)) from acyl-[acyl-carrier-protein] (acyl-ACP). This enzyme utilizes acyl-ACP as fatty acyl donor, but not acyl-CoA. This Cereibacter sphaeroides (strain ATCC 17029 / ATH 2.4.9) (Rhodobacter sphaeroides) protein is Phosphate acyltransferase.